The sequence spans 438 residues: Probable chaperone protein ClpB 1 (438 aa).

The stretch at 1 to 94 (MNTADTRQRL…NNRKIEARQA (94 aa)) forms a coiled coil. A linker region spans residues 1-118 (MNTADTRQRL…IADIVSRWTG (118 aa)). The interval 128–345 (ERQKLLGIES…RIDEVILFTP (218 aa)) is NBD2. Residue 178–185 (GPTGVGKT) coordinates ATP. Positions 346-438 (LTRENLREIV…ENDAIVMKKK (93 aa)) are C-terminal.

The protein belongs to the ClpA/ClpB family. As to quaternary structure, homohexamer. The oligomerization is ATP-dependent.

It localises to the cytoplasm. In terms of biological role, part of a stress-induced multi-chaperone system, it is involved in the recovery of the cell from heat-induced damage, in cooperation with DnaK, DnaJ and GrpE. Acts before DnaK, in the processing of protein aggregates. Protein binding stimulates the ATPase activity; ATP hydrolysis unfolds the denatured protein aggregates, which probably helps expose new hydrophobic binding sites on the surface of ClpB-bound aggregates, contributing to the solubilization and refolding of denatured protein aggregates by DnaK. The protein is Probable chaperone protein ClpB 1 (clpB1) of Chlorobaculum tepidum (strain ATCC 49652 / DSM 12025 / NBRC 103806 / TLS) (Chlorobium tepidum).